The sequence spans 602 residues: Elongation factor 4 (602 aa).

The tr-type G domain maps to 7–189 (KYIRNFSIVA…AIVSKVPAPY (183 aa)). GTP-binding positions include 19–24 (DHGKST) and 136–139 (NKID).

The protein belongs to the TRAFAC class translation factor GTPase superfamily. Classic translation factor GTPase family. LepA subfamily.

The protein resides in the cell membrane. The enzyme catalyses GTP + H2O = GDP + phosphate + H(+). Required for accurate and efficient protein synthesis under certain stress conditions. May act as a fidelity factor of the translation reaction, by catalyzing a one-codon backward translocation of tRNAs on improperly translocated ribosomes. Back-translocation proceeds from a post-translocation (POST) complex to a pre-translocation (PRE) complex, thus giving elongation factor G a second chance to translocate the tRNAs correctly. Binds to ribosomes in a GTP-dependent manner. The sequence is that of Elongation factor 4 from Clostridium botulinum (strain Loch Maree / Type A3).